We begin with the raw amino-acid sequence, 248 residues long: MSLFRDDGIVLRTQKLGEADRIITILTRGHGRVRAVARGVRRTKSKFGARLEPFSHVDVQFFARGGELVGRGLPLCTQSETIAPYGGGIVADYARYTAGTAMLETAERFTDHEGEPAVQQYLLLVGGLRTLARGEHAPHLILDAFLLRSLAVNGYAPSFEDCAKCGMPGPNRFFSVAAGGVICGDCRVPGSVVPSAQALTLLSALLSGDWATADACEARHVREGSGLVSAYLHWHLERGLRSLRYVEK.

It belongs to the RecO family.

Involved in DNA repair and RecF pathway recombination. This Streptomyces griseus subsp. griseus (strain JCM 4626 / CBS 651.72 / NBRC 13350 / KCC S-0626 / ISP 5235) protein is DNA repair protein RecO.